A 176-amino-acid chain; its full sequence is Cytochrome c-552 (176 aa).

A helical; Signal-anchor membrane pass occupies residues 12 to 32 (GALIGSLLFLLLMSWAASGIF). Heme c contacts are provided by cysteine 90, cysteine 93, histidine 94, methionine 126, and methionine 154.

Post-translationally, binds 1 heme c group covalently per subunit.

It is found in the cell membrane. Mediates the electron transport between the cytochrome bc1 complex and cytochrome-c oxidase. This chain is Cytochrome c-552 (cycM), found in Paracoccus denitrificans.